Here is a 435-residue protein sequence, read N- to C-terminus: D-amino acid dehydrogenase (435 aa).

3 to 17 lines the FAD pocket; that stretch reads VLILGSGVIGTTSAW.

Belongs to the DadA oxidoreductase family. FAD serves as cofactor.

It carries out the reaction a D-alpha-amino acid + A + H2O = a 2-oxocarboxylate + AH2 + NH4(+). The protein operates within amino-acid degradation; D-alanine degradation; NH(3) and pyruvate from D-alanine: step 1/1. Functionally, oxidative deamination of D-amino acids. This is D-amino acid dehydrogenase from Xylella fastidiosa (strain M23).